A 911-amino-acid polypeptide reads, in one-letter code: Gag-Pro polyprotein (911 aa).

A propeptide spanning residues 101-161 (AAVAQTEEIL…TKKPKRFPVL (61 aa)) is cleaved from the precursor. Polar residues-rich tracts occupy residues 113-125 (NSQTDLTKTSQNP) and 140-152 (KSSSLQDKGLSST). The tract at residues 113–178 (NSQTDLTKTS…DPEDPNPSEV (66 aa)) is disordered. The PPXY motif motif lies at 202–205 (PPPY). The PTAP/PSAP motif motif lies at 210-213 (PSAP). Residues 216–257 (MAVVNPKEELKEKIAQLEEQIKLEELHQALISKLQKLKTGNE) adopt a coiled-coil conformation. The segment at 260 to 279 (THPDTAGGLSRTPHWPGQHI) is disordered. CCHC-type zinc fingers lie at residues 547-564 (GCCFKCGKKGHFAKNCHE) and 576-593 (GLCPRCKRGKHWANECKS). A disordered region spans residues 592–626 (KSKTDNQGNPIPPHQGNRVEGPAPGPETSLWGSQL). The Peptidase A2 domain maps to 780–856 (FTGLIDTGAD…LPVNLWGRDL (77 aa)). Asp-785 serves as the catalytic Protease; shared with dimeric partner. A G-patch domain is found at 867–911 (PNDIVTAQMLAQGYSPGKGLGKKENGILHPIPNQGQSNKKGFGNF).

In terms of assembly, homodimer. Interacts with the reverse transcriptase/ribonuclease H. As to quaternary structure, homotrimer. In terms of processing, released by autocatalytic processing. The protease can undergo further autoprocessing to yield 2 shorter but enzymatically active forms of 12 kDa and 13 kDa without the GDP domain. the 12 kDa form is monomeric. Myristoylated. Myristoylation of the matrix (MA) domain mediates the transport and binding of Gag polyproteins to the host plasma membrane and is required for the assembly of viral particles. Post-translationally, specific enzymatic cleavages in vivo yield mature proteins.

Its subcellular location is the virion. The catalysed reaction is dUTP + H2O = dUMP + diphosphate + H(+). Functionally, matrix protein. Its function is as follows. Nucleocapsid protein p14: Nucleocapsid protein. In terms of biological role, capsid protein. The aspartyl protease mediates proteolytic cleavages of Gag and Gag-Pol polyproteins during or shortly after the release of the virion from the plasma membrane. Cleavages take place as an ordered, step-wise cascade to yield mature proteins. This process is called maturation. Displays maximal activity during the budding process just prior to particle release from the cell. Functionally, enhances the activity of the reverse transcriptase. May be part of the mature RT. The protein is Gag-Pro polyprotein (gag-pro) of Mason-Pfizer monkey virus (MPMV).